The primary structure comprises 383 residues: Hippurate hydrolase (383 aa).

It belongs to the peptidase M20 family.

It catalyses the reaction N-benzoylglycine + H2O = benzoate + glycine. Functionally, cleaves hippuric acid into benzoic acid and glycine. This is Hippurate hydrolase from Campylobacter jejuni subsp. jejuni serotype O:2 (strain ATCC 700819 / NCTC 11168).